The primary structure comprises 188 residues: VLGGGAIYGGGSRCSAAFNVTKGGARYFVTAGHCTNISANWSASSGGSVVGVREGTSFPTNDYGIVRYTDGSSPAGTVDLYNGSTQDISSAANAVVGQAIKKSGSTTKVTSGTVTAVNVTVNYGDGPVYNMGRTTACSAGGDSGGAHFAGSVALGIHSGSSGCSGTAGSAIHQPVTKALSAYGVTVYL.

Cys14 and Cys34 are disulfide-bonded. Residues His33, Asp62, and Ser143 each act as charge relay system in the active site. Cys137 and Cys163 are joined by a disulfide.

The protein belongs to the peptidase S1 family. In terms of assembly, monomer.

The enzyme catalyses Preferential cleavage: -Glu-|-Xaa- &gt;&gt; -Asp-|-Xaa-. Preference for Pro or Leu at P2 and Phe at P3. Cleavage of -Glu-|-Asp- and -Glu-|-Pro- bonds is slow.. Its function is as follows. Preferentially cleaves peptide bonds on the carboxyl-terminal side of glutamate. This chain is Glutamyl endopeptidase 2 (sprE), found in Streptomyces griseus.